The chain runs to 480 residues: Dihydrolipoyllysine-residue acetyltransferase component 4 of pyruvate dehydrogenase complex, chloroplastic (480 aa).

The transit peptide at 1–53 (MAVSSSSFLSTASLTNSKSNISFASSVSPSLRSVVFRSTTPATSHRRSMTVRS) directs the protein to the chloroplast. The 79-residue stretch at 55 to 133 (IREIFMPALS…AAIGLLAETE (79 aa)) folds into the Lipoyl-binding domain. Position 96 is an N6-lipoyllysine (Lys96). Disordered stretches follow at residues 140-168 (KSKAASKSSSSVAEAVVPSPPPVTSSPAP) and 224-245 (AGIAPSKSSIAPPPPPPPPVTA). Positions 142–156 (KAASKSSSSVAEAVV) are enriched in low complexity. Residues 187 to 224 (VATPYAKKLAKQHKVDIESVAGTGPFGRITASDVETAA) form the Peripheral subunit-binding (PSBD) domain. Positions 234–243 (APPPPPPPPV) are enriched in pro residues. His453 is an active-site residue.

Belongs to the 2-oxoacid dehydrogenase family. (R)-lipoate serves as cofactor.

It is found in the plastid. The protein resides in the chloroplast stroma. The catalysed reaction is N(6)-[(R)-dihydrolipoyl]-L-lysyl-[protein] + acetyl-CoA = N(6)-[(R)-S(8)-acetyldihydrolipoyl]-L-lysyl-[protein] + CoA. Functionally, the pyruvate dehydrogenase complex catalyzes the overall conversion of pyruvate to acetyl-CoA and CO(2). It contains multiple copies of three enzymatic components: pyruvate dehydrogenase (E1), dihydrolipoamide acetyltransferase (E2) and lipoamide dehydrogenase (E3). The chain is Dihydrolipoyllysine-residue acetyltransferase component 4 of pyruvate dehydrogenase complex, chloroplastic (LTA2) from Arabidopsis thaliana (Mouse-ear cress).